Reading from the N-terminus, the 755-residue chain is Anaphase-promoting complex subunit 5 (755 aa).

Residue serine 195 is modified to Phosphoserine. TPR repeat units lie at residues 209-249, 250-300, 301-337, 338-378, 379-418, 419-466, 467-500, 501-540, 541-580, 581-620, 621-660, 661-696, and 697-736; these read QKQA…FNPD, FAEA…GRSL, RYAA…SNDH, VCLQ…YLAS, LGIQ…SELI, DISI…TESF, AVAL…FPPN, SQHA…ALNS, IEGV…TEMV, ISVL…QYLA, SETV…ILDK, GRAM…NLNE, and AKNY…CAML. Threonine 232 carries the post-translational modification Phosphothreonine.

Belongs to the APC5 family. The mammalian APC/C is composed at least of 14 distinct subunits ANAPC1, ANAPC2, CDC27/APC3, ANAPC4, ANAPC5, CDC16/APC6, ANAPC7, CDC23/APC8, ANAPC10, ANAPC11, CDC26/APC12, ANAPC13, ANAPC15 and ANAPC16 that assemble into a complex of at least 19 chains with a combined molecular mass of around 1.2 MDa; APC/C interacts with FZR1 and FBXO5.

The protein localises to the nucleus. It is found in the cytoplasm. The protein resides in the cytoskeleton. It localises to the spindle. It participates in protein modification; protein ubiquitination. Its function is as follows. Component of the anaphase promoting complex/cyclosome (APC/C), a cell cycle-regulated E3 ubiquitin ligase that controls progression through mitosis and the G1 phase of the cell cycle. The APC/C complex acts by mediating ubiquitination and subsequent degradation of target proteins: it mainly mediates the formation of 'Lys-11'-linked polyubiquitin chains and, to a lower extent, the formation of 'Lys-48'- and 'Lys-63'-linked polyubiquitin chains. The APC/C complex catalyzes assembly of branched 'Lys-11'-/'Lys-48'-linked branched ubiquitin chains on target proteins. This Homo sapiens (Human) protein is Anaphase-promoting complex subunit 5 (ANAPC5).